Reading from the N-terminus, the 222-residue chain is MISKDKLKKLVGWEALKYIKSNTIIGVGTGSTVNYFIEALSSIKQQIEGVVSSSQHSSNQLKKLGIPLYNLNNLNDLEIYIDSADEIDLHMQMIKGGGGALTKEKIIAFAAKKFICIVDDSKQVNILGRKGPIPVEVIPMARSVVSKSLICLGGLPEYRNGVITDNGNSILDVYNMNITDASLLEQRINNIPGVVSVGLFAQRKADIALIGTQKGIKILNSN.

Substrate-binding positions include 29–32, 82–85, and 95–98; these read TGST, DSAD, and KGGG. Glu104 functions as the Proton acceptor in the catalytic mechanism. A substrate-binding site is contributed by Lys122.

Belongs to the ribose 5-phosphate isomerase family. In terms of assembly, homodimer.

The enzyme catalyses aldehydo-D-ribose 5-phosphate = D-ribulose 5-phosphate. It participates in carbohydrate degradation; pentose phosphate pathway; D-ribose 5-phosphate from D-ribulose 5-phosphate (non-oxidative stage): step 1/1. Catalyzes the reversible conversion of ribose-5-phosphate to ribulose 5-phosphate. This Blochmanniella floridana protein is Ribose-5-phosphate isomerase A.